Reading from the N-terminus, the 157-residue chain is Probable succinate transporter subunit YjjB (157 aa).

The next 4 membrane-spanning stretches (helical) occupy residues 10 to 30 (LAQD…VFNV), 55 to 75 (AGFN…SIGI), 87 to 107 (IFTV…TAMI), and 129 to 149 (FLKA…PGLW).

It belongs to the ThrE exporter (TC 2.A.79) family. In terms of assembly, the transporter is composed of YjjB and YjjP.

The protein resides in the cell inner membrane. In terms of biological role, involved in succinate export with YjjP. Both proteins are required for export. Participates in succinate export, but also in the export of other dicarboxylates, such as fumarate and malate. Contributes to succinate production under both aerobic and anaerobic conditions, and increases fumarate and malate production during anaerobic succinate production. In Klebsiella aerogenes (strain ATCC 13048 / DSM 30053 / CCUG 1429 / JCM 1235 / KCTC 2190 / NBRC 13534 / NCIMB 10102 / NCTC 10006 / CDC 819-56) (Enterobacter aerogenes), this protein is Probable succinate transporter subunit YjjB.